Reading from the N-terminus, the 68-residue chain is Large ribosomal subunit protein uL29 (68 aa).

This sequence belongs to the universal ribosomal protein uL29 family.

The polypeptide is Large ribosomal subunit protein uL29 (Picosynechococcus sp. (strain ATCC 27264 / PCC 7002 / PR-6) (Agmenellum quadruplicatum)).